The chain runs to 306 residues: Non-specific ribonucleoside hydrolase RihC (306 aa).

The active site involves His235.

Belongs to the IUNH family. RihC subfamily.

Its function is as follows. Hydrolyzes both purine and pyrimidine ribonucleosides with a broad-substrate specificity. The chain is Non-specific ribonucleoside hydrolase RihC from Salmonella paratyphi B (strain ATCC BAA-1250 / SPB7).